Reading from the N-terminus, the 297-residue chain is MPVALPVTLYPDEPMARHSSWRAGGTARYYAEPATPDEAIALAAWAREQQLPLIWIGRGTNLLVRDEGFDGVIASYRGQRWELIEHGETAEVWIEAGAPMAGTARRLAAMGWAGLEWAEGLPGAVGGAIVGNAGCYGGSVAEVLITADLLLNGSECVEWSVHDLAYTYRESVLKQLLHTGIPPLVLAGRFRLQRGDPAALTARMKAIAAERKQKTPAGSSCGSVFKNPAGDFAGRLIEAAGLKGVRIGDAEISTLHANYIINRGQARAADILALIDLARTKVADQFGITLQLEVRII.

One can recognise an FAD-binding PCMH-type domain in the interval 22-195; it reads RAGGTARYYA…LAGRFRLQRG (174 aa). Arg-169 is a catalytic residue. The Proton donor role is filled by Ser-223. Glu-293 is a catalytic residue.

Belongs to the MurB family. Requires FAD as cofactor.

It is found in the cytoplasm. The catalysed reaction is UDP-N-acetyl-alpha-D-muramate + NADP(+) = UDP-N-acetyl-3-O-(1-carboxyvinyl)-alpha-D-glucosamine + NADPH + H(+). The protein operates within cell wall biogenesis; peptidoglycan biosynthesis. In terms of biological role, cell wall formation. In Chloroflexus aurantiacus (strain ATCC 29364 / DSM 637 / Y-400-fl), this protein is UDP-N-acetylenolpyruvoylglucosamine reductase.